The chain runs to 117 residues: Large ribosomal subunit protein bL19 (117 aa).

It belongs to the bacterial ribosomal protein bL19 family.

In terms of biological role, this protein is located at the 30S-50S ribosomal subunit interface and may play a role in the structure and function of the aminoacyl-tRNA binding site. In Shewanella denitrificans (strain OS217 / ATCC BAA-1090 / DSM 15013), this protein is Large ribosomal subunit protein bL19.